The following is a 328-amino-acid chain: Coiled-coil domain-containing protein 54 (328 aa).

The stretch at 122–151 (TTKDILSMKEDIKALKKKVTELEKQNSYSR) forms a coiled coil. T182 carries the post-translational modification Phosphothreonine. Positions 186 to 197 (TDREMSSAEPEK) are enriched in basic and acidic residues. The tract at residues 186-205 (TDREMSSAEPEKVPSYPKST) is disordered.

The chain is Coiled-coil domain-containing protein 54 (CCDC54) from Macaca fascicularis (Crab-eating macaque).